The primary structure comprises 227 residues: MSIIVALDAKSQYDALSIADQLDPSLCRVKVGKELFTHDGPQTVRILQDRGFELFLDLKFHDIPNTTAQAVCAAADLGVWMVNVHASGGRKMMETCVERLKAGNYRTQLIAVTVLTSMGREDLRDIGLDVEPFEQVKRLAQLTQESGLDGVVCSAQEAKMLRDLLGTEFALVTPGIRPEGANADDQKRIVTPKQAMLDGSTHLVIGRPITKSERPNEMLKQILSSLA.

Residues Asp8, Lys30, 57-66 (DLKFHDIPNT), Thr116, Arg177, Gln186, Gly206, and Arg207 each bind substrate. Catalysis depends on Lys59, which acts as the Proton donor.

Belongs to the OMP decarboxylase family. Type 1 subfamily. As to quaternary structure, homodimer.

It carries out the reaction orotidine 5'-phosphate + H(+) = UMP + CO2. The protein operates within pyrimidine metabolism; UMP biosynthesis via de novo pathway; UMP from orotate: step 2/2. In terms of biological role, catalyzes the decarboxylation of orotidine 5'-monophosphate (OMP) to uridine 5'-monophosphate (UMP). This Acinetobacter baylyi (strain ATCC 33305 / BD413 / ADP1) protein is Orotidine 5'-phosphate decarboxylase.